The following is a 30-amino-acid chain: Hainantoxin F6-34.84 (30 aa).

2 disulfides stabilise this stretch: cysteine 2–cysteine 15 and cysteine 9–cysteine 24.

Belongs to the AVIT (prokineticin) family. Expressed by the venom gland.

The protein resides in the secreted. The sequence is that of Hainantoxin F6-34.84 from Cyriopagopus hainanus (Chinese bird spider).